A 209-amino-acid polypeptide reads, in one-letter code: Thymidylate kinase (209 aa).

ATP is bound at residue 7 to 14; the sequence is GVEGSGKS.

This sequence belongs to the thymidylate kinase family.

The catalysed reaction is dTMP + ATP = dTDP + ADP. In terms of biological role, phosphorylation of dTMP to form dTDP in both de novo and salvage pathways of dTTP synthesis. In Solidesulfovibrio magneticus (strain ATCC 700980 / DSM 13731 / RS-1) (Desulfovibrio magneticus), this protein is Thymidylate kinase.